The sequence spans 421 residues: Zinc metalloproteinase-disintegrin-like crotastatin (421 aa).

A Peptidase M12B domain is found at 10–206 (KYVKLFLVAD…NMPQCILKKP (197 aa)). A glycan (N-linked (GlcNAc...) asparagine) is linked at N29. 3 cysteine pairs are disulfide-bonded: C121-C201, C161-C185, and C163-C168. Residue H146 participates in Zn(2+) binding. Residue E147 is part of the active site. Residues H150 and H156 each coordinate Zn(2+). The region spanning 214–299 (PAVCGNYFVE…TECTDRFQRN (86 aa)) is the Disintegrin domain. Residues V216, N219, F221, E223, E226, and D229 each contribute to the Ca(2+) site. Disulfide bonds link C217/C246, C228/C241, C230/C236, C240/C263, C254/C260, C259/C285, C272/C292, C279/C310, C303/C315, C322/C372, C337/C383, C350/C360, C367/C409, and C403/C414. A D/ECD-tripeptide motif is present at residues 278–280 (ECD). Ca(2+) is bound by residues D280, M281, D283, D294, and R295.

This sequence belongs to the venom metalloproteinase (M12B) family. P-III subfamily. P-IIIc sub-subfamily. Homodimer; disulfide-linked. Zn(2+) is required as a cofactor. In terms of tissue distribution, expressed by the venom gland.

It localises to the secreted. In terms of biological role, snake venom zinc metalloprotease that induces apoptosis in vascular endothelial cells (VEC), without degrading the extracellular matrix (it cannot cleave collagen) or inhibiting adhesion of VEC. Has also fibrinogenolytic and hemorrhagic activities. The protein is Zinc metalloproteinase-disintegrin-like crotastatin of Crotalus durissus terrificus (South American rattlesnake).